The primary structure comprises 40 residues: Beta/delta-ctenitoxin-Pr1a (40 aa).

Intrachain disulfides connect C1–C15, C8–C21, C14–C31, and C23–C29.

The protein belongs to the neurotoxin 03 (Tx2) family. 05 subfamily. Expressed by the venom gland.

It is found in the secreted. Potent insecticidal toxin that binds to two distinct sites in insect sodium channels, with close affinity (Kd1=34.7 pM and Kd2=35.1 pM). Its association is rather fast (1.4 and 8.5 minutes, respectively for sites 1 and 2) and its dissociation is a slower process (5.4 and 32.8 minutes, respectively). On rat brain synaptosomes the toxin partially competes (~30%) with the beta-toxin CssIV, but does not compete with the alpha-toxin AaII, nor with the beta-toxin Ts VII. On cockroach nerve cord synaptosomes, the toxin does not compete with the anti-insect toxin LqqIT1, but it competes with the 'alpha-like' toxin BomIV (IC(50)=80 pM). In cockroach neurons, the toxin inhibits the inactivation of sodium channels and it shifts the sodium channel activation to hyperpolarizing potentials. Hence, it behaves like an 'alpha-like' toxin and binds preferentially to site 3 on the insect Nav channel, located on the domain IV. The toxin may also inhibit the N-methyl-D-aspartate (NMDA)-subtype of ionotropic glutamate receptor (GRIN). In vivo, the toxin causes excitatory effects on insects. The sequence is that of Beta/delta-ctenitoxin-Pr1a from Phoneutria reidyi (Brazilian Amazonian armed spider).